A 261-amino-acid polypeptide reads, in one-letter code: HLA class II histocompatibility antigen, DM alpha chain (261 aa).

A signal peptide spans 1–26 (MGHEQNQGAALLQMLPLLWLLPHSWA). An alpha-1 region spans residues 27 to 124 (VPEAPTPMWP…KLDGKIPVSR (98 aa)). Residues 27-233 (VPEAPTPMWP…PSDLLENVLC (207 aa)) are Lumenal-facing. An N-linked (GlcNAc...) asparagine glycan is attached at asparagine 41. Intrachain disulfides connect cysteine 50-cysteine 105 and cysteine 147-cysteine 202. The Ig-like C1-type domain occupies 121–215 (PVSRGFPIAE…HEIDRYTAIA (95 aa)). The tract at residues 125-217 (GFPIAEVFTL…IDRYTAIAYW (93 aa)) is alpha-2. The interval 218 to 233 (VPRNALPSDLLENVLC) is connecting peptide. The chain crosses the membrane as a helical span at residues 234 to 254 (GVAFGLGVLGIIVGIVLIIYF). Residues 255-261 (RKPCSGD) are Cytoplasmic-facing.

It belongs to the MHC class II family. In terms of assembly, heterodimer of an alpha chain (DMA) and a beta chain (DMB). Interacts with MHCII; this interaction mediates rapid selection of high-affinity peptides in a pH-dependent manner, with an optimum at pH 5.5.

It localises to the late endosome membrane. It is found in the lysosome membrane. In terms of biological role, plays a critical role in catalyzing the release of class II-associated invariant chain peptide (CLIP) from newly synthesized MHC class II molecules and freeing the peptide binding site for acquisition of antigenic peptides. In B-cells, the interaction between HLA-DM and MHC class II molecules is regulated by HLA-DO. The polypeptide is HLA class II histocompatibility antigen, DM alpha chain (HLA-DMA) (Homo sapiens (Human)).